A 274-amino-acid polypeptide reads, in one-letter code: Formamidopyrimidine-DNA glycosylase (274 aa).

P2 (schiff-base intermediate with DNA) is an active-site residue. The active-site Proton donor is E3. K58 serves as the catalytic Proton donor; for beta-elimination activity. H91, R110, and K152 together coordinate DNA. Residues 237 to 271 (KVYGRKNLPCLVCENKIETVVIAGRHSAFCPHCQP) form an FPG-type zinc finger. The active-site Proton donor; for delta-elimination activity is R261.

Belongs to the FPG family. Monomer. The cofactor is Zn(2+).

The catalysed reaction is Hydrolysis of DNA containing ring-opened 7-methylguanine residues, releasing 2,6-diamino-4-hydroxy-5-(N-methyl)formamidopyrimidine.. It catalyses the reaction 2'-deoxyribonucleotide-(2'-deoxyribose 5'-phosphate)-2'-deoxyribonucleotide-DNA = a 3'-end 2'-deoxyribonucleotide-(2,3-dehydro-2,3-deoxyribose 5'-phosphate)-DNA + a 5'-end 5'-phospho-2'-deoxyribonucleoside-DNA + H(+). Functionally, involved in base excision repair of DNA damaged by oxidation or by mutagenic agents. Acts as a DNA glycosylase that recognizes and removes damaged bases. Has a preference for oxidized purines, such as 7,8-dihydro-8-oxoguanine (8-oxoG). Has AP (apurinic/apyrimidinic) lyase activity and introduces nicks in the DNA strand. Cleaves the DNA backbone by beta-delta elimination to generate a single-strand break at the site of the removed base with both 3'- and 5'-phosphates. The chain is Formamidopyrimidine-DNA glycosylase from Legionella pneumophila (strain Paris).